The primary structure comprises 130 residues: EG45-like domain containing protein 2 (130 aa).

Residues 1 to 25 (MIKMAVKFVVVMIVFAQILAPIAEA) form the signal peptide. The Expansin-like EG45 domain maps to 28 to 130 (GKAVYYDPPY…GNIRVVYTPI (103 aa)). An N-linked (GlcNAc...) asparagine glycan is attached at N106.

Expressed in unstressed leaves.

The protein resides in the secreted. Its function is as follows. Plays a systemic role in water and solute homeostasis. The chain is EG45-like domain containing protein 2 (EGC2) from Arabidopsis thaliana (Mouse-ear cress).